The chain runs to 122 residues: ATP synthase epsilon chain (122 aa).

Belongs to the ATPase epsilon chain family. F-type ATPases have 2 components, CF(1) - the catalytic core - and CF(0) - the membrane proton channel. CF(1) has five subunits: alpha(3), beta(3), gamma(1), delta(1), epsilon(1). CF(0) has three main subunits: a, b and c.

The protein localises to the cell membrane. Produces ATP from ADP in the presence of a proton gradient across the membrane. The protein is ATP synthase epsilon chain of Rhodococcus erythropolis (strain PR4 / NBRC 100887).